A 249-amino-acid polypeptide reads, in one-letter code: MAPHPGKLKPATKAVHVRDLARRFATKTILDGVDLDIEEGEFVALLGRSGSGKSTFLRALAGLDHGVEGTGTLETPESLSVVFQDARLLPWRTVIQNVTLGLTGASGQEAGRKALAEVGLAGRETAWPNQLSGGEQQRVALARSLVREPALLLADEPFGALDALTRLKMHDLLRELCARHRPAVLLVTHDVDEAISLADRILVLDEGRLIEDLKIDLPTPRDHGDPRFAQFRIQLLSRLGVELPGRKAA.

The ABC transporter domain occupies valine 15–phenylalanine 231. ATP is bound at residue glycine 47–serine 54.

It belongs to the ABC transporter superfamily. Aliphatic sulfonates importer (TC 3.A.1.17.2) family. In terms of assembly, the complex is composed of two ATP-binding proteins (SsuB), two transmembrane proteins (SsuC) and a solute-binding protein (SsuA).

The protein resides in the cell inner membrane. It carries out the reaction ATP + H2O + aliphatic sulfonate-[sulfonate-binding protein]Side 1 = ADP + phosphate + aliphatic sulfonateSide 2 + [sulfonate-binding protein]Side 1.. Its function is as follows. Part of the ABC transporter complex SsuABC involved in aliphatic sulfonates import. Responsible for energy coupling to the transport system. In Rhizobium johnstonii (strain DSM 114642 / LMG 32736 / 3841) (Rhizobium leguminosarum bv. viciae), this protein is Aliphatic sulfonates import ATP-binding protein SsuB 2.